A 353-amino-acid polypeptide reads, in one-letter code: Probable butyrate kinase (353 aa).

Belongs to the acetokinase family.

The protein localises to the cytoplasm. The catalysed reaction is butanoate + ATP = butanoyl phosphate + ADP. The protein is Probable butyrate kinase of Bacteroides thetaiotaomicron (strain ATCC 29148 / DSM 2079 / JCM 5827 / CCUG 10774 / NCTC 10582 / VPI-5482 / E50).